Reading from the N-terminus, the 1700-residue chain is Rho guanine nucleotide exchange factor 28 (1700 aa).

The tract at residues 288–343 (TEKATMPSGAAETEEEVRNLESGRSPSEEEEDAKSIKSQVDGPSEHEDQDRLPLDR) is disordered. Phosphoserine is present on residues S312 and S314. The span at 330-343 (PSEHEDQDRLPLDR) shows a compositional bias: basic and acidic residues. S478 bears the Phosphoserine mark. The interval 483 to 532 (VADSEGEGGSEPPICYAVGSQSSPRTGLPSGDELDSFETNTEPDCNISRT) is disordered. Position 623 is a phosphoserine (S623). The Phorbol-ester/DAG-type zinc-finger motif lies at 651–698 (RHQFVPGTFSGVLQCSGCDKTLLGKESLQCANCKANTHKGCKDAVPPC). The DH domain maps to 846–1041 (KRQDVIFELM…KDMIAAVDLK (196 aa)). The PH domain occupies 1095–1184 (ATGRFKDILA…NWMRRIQQAV (90 aa)). 2 disordered regions span residues 1184–1205 (VESC…RRKA) and 1289–1328 (KMGD…TEGT). Residues 1191-1205 (EGGRTSESDEERRKA) are compositionally biased toward basic and acidic residues. Positions 1292-1301 (DVSQSSEESP) are interaction with PTK2/FAK1; required for regulation of axonal branching and synapse formation. Residues 1309 to 1325 (TPSTQDVPASPTASLVT) show a composition bias toward polar residues. The interval 1369–1380 (IIQAIQNLTRLL) is mediates cytoplasmic retention and interaction with YWHAH. Residues 1421-1522 (QEKSRYLEKQ…RERQKMRVQQ (102 aa)) are a coiled coil. The interaction with microtubules stretch occupies residues 1421–1700 (QEKSRYLEKQ…DGAEENILYL (280 aa)). The interval 1493–1524 (QLQEYQQSLERLREGQRMVERERQKMRVQQGL) is RNA-binding. S1535 carries the post-translational modification Phosphoserine. Residues 1563–1576 (FINEAFGHMSLNTS) form a mediates cytoplasmic retention and interaction with MAPK8IP1 region. Positions 1602–1700 (SESPTELKID…DGAEENILYL (99 aa)) are disordered. S1604 bears the Phosphoserine mark. Residues 1647–1663 (DLDSFQSESSSPQDSNQ) are compositionally biased toward low complexity. The span at 1664–1675 (RGPQPQTLTTEA) shows a compositional bias: polar residues.

As to quaternary structure, homooligomer; forms some cytoplasmic aggregates. Forms a complex with MAPK8 and MAPK8IP1. Interacts with RHOA. Interacts with microtubules. Interacts with YWHAE and YWHAH. Interacts with PTK2/FAK1. Interacts with NEFL. Interacts with CTNND2; prevents interaction with RHOA. Post-translationally, phosphorylated on tyrosine upon stimulation of cells by laminin. Highly enriched in the brain (at protein level). Also detected in lung and kidney.

The protein resides in the cytoplasm. Its subcellular location is the cell membrane. Functionally, functions as a RHOA-specific guanine nucleotide exchange factor regulating signaling pathways downstream of integrins and growth factor receptors. Functions in axonal branching, synapse formation and dendritic morphogenesis. Also functions in focal adhesion formation, cell motility and B-lymphocytes activation. May regulate NEFL expression and aggregation and play a role in apoptosis. The protein is Rho guanine nucleotide exchange factor 28 (Arhgef28) of Mus musculus (Mouse).